Reading from the N-terminus, the 340-residue chain is Alpha-1,4-N-acetylglucosaminyltransferase (340 aa).

Over 1 to 4 the chain is Cytoplasmic; the sequence is MRKE. The helical; Signal-anchor for type II membrane protein transmembrane segment at 5–25 threads the bilayer; it reads LQLSLSVTLLLVCGFLYQFTL. The Lumenal segment spans residues 26 to 340; it reads KSSCLFCLPS…VTGELGPGNK (315 aa). N-linked (GlcNAc...) asparagine glycans are attached at residues Asn99 and Asn138. Positions 167 to 169 match the DXD motif motif; that stretch reads DTD. Asn251 and Asn282 each carry an N-linked (GlcNAc...) asparagine glycan.

The protein belongs to the glycosyltransferase 32 family. Detected in stomach and pancreas.

It is found in the golgi apparatus membrane. It participates in protein modification; protein glycosylation. Catalyzes the transfer of N-acetylglucosamine (GlcNAc) to core 2 branched O-glycans. Necessary for the synthesis of type III mucin which is specifically produced in the stomach, duodenum, and pancreatic duct. May protect against inflammation-associated gastric adenocarcinomas. This chain is Alpha-1,4-N-acetylglucosaminyltransferase (A4GNT), found in Homo sapiens (Human).